Reading from the N-terminus, the 461-residue chain is Protein KlcB (461 aa).

2 disordered regions span residues 84–107 and 349–379; these read PEATTPAARRRTKARKSKPQTEDK and RAKAQEPAGQRREPVTPAKPEPEPAKDEDAP. Positions 91 to 101 are enriched in basic residues; that stretch reads ARRRTKARKSK. Basic and acidic residues predominate over residues 357–377; it reads GQRREPVTPAKPEPEPAKDED.

The chain is Protein KlcB (klcB) from Escherichia coli.